We begin with the raw amino-acid sequence, 274 residues long: NH(3)-dependent NAD(+) synthetase (274 aa).

ATP is bound at residue 46 to 53; that stretch reads GISGGQDS. Position 52 (Asp52) interacts with Mg(2+). Arg140 is a deamido-NAD(+) binding site. Thr160 contacts ATP. Glu165 contributes to the Mg(2+) binding site. The deamido-NAD(+) site is built by Lys173 and Asp180. Positions 189 and 211 each coordinate ATP. Residue 260 to 261 participates in deamido-NAD(+) binding; the sequence is HK.

The protein belongs to the NAD synthetase family. As to quaternary structure, homodimer.

The catalysed reaction is deamido-NAD(+) + NH4(+) + ATP = AMP + diphosphate + NAD(+) + H(+). Its pathway is cofactor biosynthesis; NAD(+) biosynthesis; NAD(+) from deamido-NAD(+) (ammonia route): step 1/1. Functionally, catalyzes the ATP-dependent amidation of deamido-NAD to form NAD. Uses ammonia as a nitrogen source. This Streptococcus suis (strain 05ZYH33) protein is NH(3)-dependent NAD(+) synthetase.